A 183-amino-acid chain; its full sequence is Endoribonuclease YbeY (183 aa).

Zn(2+) contacts are provided by His-143, His-147, and His-153.

The protein belongs to the endoribonuclease YbeY family. Zn(2+) is required as a cofactor.

Its subcellular location is the cytoplasm. Its function is as follows. Single strand-specific metallo-endoribonuclease involved in late-stage 70S ribosome quality control and in maturation of the 3' terminus of the 16S rRNA. The protein is Endoribonuclease YbeY of Rickettsia bellii (strain OSU 85-389).